The sequence spans 260 residues: 3'-5' ssDNA/RNA exonuclease TatD (260 aa).

Residues Glu-92, His-128, and His-153 each coordinate a divalent metal cation.

This sequence belongs to the metallo-dependent hydrolases superfamily. TatD-type hydrolase family. TatD subfamily. In terms of assembly, monomer. Requires Mg(2+) as cofactor.

It is found in the cytoplasm. In terms of biological role, 3'-5' exonuclease that prefers single-stranded DNA and RNA. May play a role in the H(2)O(2)-induced DNA damage repair. This chain is 3'-5' ssDNA/RNA exonuclease TatD, found in Pectobacterium parmentieri (strain WPP163) (Pectobacterium wasabiae (strain WPP163)).